A 334-amino-acid chain; its full sequence is Dual specificity mitogen-activated protein kinase kinase 6 (334 aa).

Basic residues predominate over residues 1–11; it reads MSQSKGKKRNP. The tract at residues 1-34 is disordered; that stretch reads MSQSKGKKRNPGLKIPKEAFEQPQTSSTPPRDLD. Residues 4 to 19 form a d domain region; that stretch reads SKGKKRNPGLKIPKEA. In terms of domain architecture, Protein kinase spans 53-314; that stretch reads LEPIVELGRG…YPELMQHPFF (262 aa). ATP contacts are provided by residues 59 to 67 and K82; that span reads LGRGAYGVV. D179 functions as the Proton acceptor in the catalytic mechanism. Phosphoserine; by MAPK3 is present on S207. At T211 the chain carries Phosphothreonine; by MAPK3. The segment at 311-334 is DVD domain; that stretch reads HPFFTLHESKATDVASFVKSILGD.

This sequence belongs to the protein kinase superfamily. STE Ser/Thr protein kinase family. MAP kinase kinase subfamily. Dimer. Interacts (via its D domain) with its substrates MAPK11, MAPK12, MAPK13 and MAPK14. Interacts (via its DVD domain) with MAP3Ks activators like MAP3K5/ASK1, MAP3K1/MEKK1, MAP3K2/MEKK2, MAP3K3/MEKK3, MAP3K4/MEKK4, MAP3K7/TAK1, MAP3K11/MLK3 and MAP3K17/TAOK2. Interacts with DCTN1. Interacts with EIF2AK2/PKR. In terms of processing, weakly autophosphorylated. Phosphorylated at Ser-207 and Thr-211 by the majority of M3Ks, such as MAP3K5/ASK1, MAP3K1/MEKK1, MAP3K2/MEKK2, MAP3K3/MEKK3, MAP3K4/MEKK4, MAP3K7/TAK1, MAP3K11/MLK3 and MAP3K17/TAOK2. In response to genotoxic stress, MAP3K-phosphorylated MAP2K6 is ubiquitinated and degraded by the SCF(FBXO31) complex.

Its subcellular location is the nucleus. The protein resides in the cytoplasm. It is found in the cytoskeleton. The catalysed reaction is L-seryl-[protein] + ATP = O-phospho-L-seryl-[protein] + ADP + H(+). It catalyses the reaction L-threonyl-[protein] + ATP = O-phospho-L-threonyl-[protein] + ADP + H(+). It carries out the reaction L-tyrosyl-[protein] + ATP = O-phospho-L-tyrosyl-[protein] + ADP + H(+). Activated by dual phosphorylation on Ser-207 and Thr-211 in response to a variety of cellular stresses, including UV radiation, osmotic shock, hypoxia, inflammatory cytokines, interferon gamma (IFNG), and less often by growth factors. MAP2K6/MKK6 is activated by the majority of M3Ks, such as MAP3K5/ASK1, MAP3K1/MEKK1, MAP3K2/MEKK2, MAP3K3/MEKK3, MAP3K4/MEKK4, MAP3K7/TAK1, MAP3K11/MLK3 and MAP3K17/TAOK2. In terms of biological role, dual specificity protein kinase which acts as an essential component of the MAP kinase signal transduction pathway. With MAP3K3/MKK3, catalyzes the concomitant phosphorylation of a threonine and a tyrosine residue in the MAP kinases p38 MAPK11, MAPK12, MAPK13 and MAPK14 and plays an important role in the regulation of cellular responses to cytokines and all kinds of stresses. Especially, MAP2K3/MKK3 and MAP2K6/MKK6 are both essential for the activation of MAPK11 and MAPK13 induced by environmental stress, whereas MAP2K6/MKK6 is the major MAPK11 activator in response to TNF. MAP2K6/MKK6 also phosphorylates and activates PAK6. The p38 MAP kinase signal transduction pathway leads to direct activation of transcription factors. Nuclear targets of p38 MAP kinase include the transcription factors ATF2 and ELK1. Within the p38 MAPK signal transduction pathway, MAP3K6/MKK6 mediates phosphorylation of STAT4 through MAPK14 activation, and is therefore required for STAT4 activation and STAT4-regulated gene expression in response to IL-12 stimulation. The pathway is also crucial for IL-6-induced SOCS3 expression and down-regulation of IL-6-mediated gene induction; and for IFNG-dependent gene transcription. Has a role in osteoclast differentiation through NF-kappa-B transactivation by TNFSF11, and in endochondral ossification and since SOX9 is another likely downstream target of the p38 MAPK pathway. MAP2K6/MKK6 mediates apoptotic cell death in thymocytes. Acts also as a regulator for melanocytes dendricity, through the modulation of Rho family GTPases. The protein is Dual specificity mitogen-activated protein kinase kinase 6 (MAP2K6) of Bos taurus (Bovine).